Reading from the N-terminus, the 180-residue chain is Cytidylate kinase (180 aa).

Residue 7–15 (GPPGSGTTT) participates in ATP binding.

Belongs to the cytidylate kinase family. Type 2 subfamily.

The protein resides in the cytoplasm. It carries out the reaction CMP + ATP = CDP + ADP. The catalysed reaction is dCMP + ATP = dCDP + ADP. The sequence is that of Cytidylate kinase (cmk) from Archaeoglobus fulgidus (strain ATCC 49558 / DSM 4304 / JCM 9628 / NBRC 100126 / VC-16).